The primary structure comprises 70 residues: Large ribosomal subunit protein bL31 (70 aa).

K8 bears the N6-acetyllysine mark. Zn(2+) is bound by residues C16, C18, C37, and C40.

It belongs to the bacterial ribosomal protein bL31 family. Type A subfamily. Part of the 50S ribosomal subunit. Zn(2+) serves as cofactor.

Functionally, binds the 23S rRNA. This is Large ribosomal subunit protein bL31 from Escherichia coli O6:K15:H31 (strain 536 / UPEC).